Reading from the N-terminus, the 1393-residue chain is DNA-directed RNA polymerase subunit beta'' (1393 aa).

Residues Cys220, Cys291, Cys298, and Cys301 each contribute to the Zn(2+) site.

The protein belongs to the RNA polymerase beta' chain family. RpoC2 subfamily. As to quaternary structure, in plastids the minimal PEP RNA polymerase catalytic core is composed of four subunits: alpha, beta, beta', and beta''. When a (nuclear-encoded) sigma factor is associated with the core the holoenzyme is formed, which can initiate transcription. Zn(2+) is required as a cofactor.

It localises to the plastid. Its subcellular location is the chloroplast. It carries out the reaction RNA(n) + a ribonucleoside 5'-triphosphate = RNA(n+1) + diphosphate. In terms of biological role, DNA-dependent RNA polymerase catalyzes the transcription of DNA into RNA using the four ribonucleoside triphosphates as substrates. The protein is DNA-directed RNA polymerase subunit beta'' of Gossypium hirsutum (Upland cotton).